The sequence spans 360 residues: Phospho-N-acetylmuramoyl-pentapeptide-transferase (360 aa).

A run of 10 helical transmembrane segments spans residues 26 to 46 (AILGVLTALIIAFLVGPAMIR), 70 to 90 (GTPTMGGALILVAVAVSTLLW), 97 to 117 (FVWVVLMVTLLFGLIGGIDDY), 134 to 154 (FFWQSVVGFATAILLYYTAQA), 168 to 188 (VAIQLGPWFILLTWFVIVGAS), 199 to 219 (GLAIMPTVLVAGAFGVFAYLS), 236 to 256 (VGDLVVFTGALVGAGLGFLWF), 263 to 283 (VFMGDVGALALGAALGVLAVV), 288 to 308 (IVLVIMGGVFVVETLSVIMQV), and 338 to 358 (VIVRFWIITVILVLVGLATLK).

This sequence belongs to the glycosyltransferase 4 family. MraY subfamily. Mg(2+) serves as cofactor.

The protein resides in the cell inner membrane. It carries out the reaction UDP-N-acetyl-alpha-D-muramoyl-L-alanyl-gamma-D-glutamyl-meso-2,6-diaminopimeloyl-D-alanyl-D-alanine + di-trans,octa-cis-undecaprenyl phosphate = di-trans,octa-cis-undecaprenyl diphospho-N-acetyl-alpha-D-muramoyl-L-alanyl-D-glutamyl-meso-2,6-diaminopimeloyl-D-alanyl-D-alanine + UMP. It participates in cell wall biogenesis; peptidoglycan biosynthesis. In terms of biological role, catalyzes the initial step of the lipid cycle reactions in the biosynthesis of the cell wall peptidoglycan: transfers peptidoglycan precursor phospho-MurNAc-pentapeptide from UDP-MurNAc-pentapeptide onto the lipid carrier undecaprenyl phosphate, yielding undecaprenyl-pyrophosphoryl-MurNAc-pentapeptide, known as lipid I. The polypeptide is Phospho-N-acetylmuramoyl-pentapeptide-transferase (Thioalkalivibrio sulfidiphilus (strain HL-EbGR7)).